We begin with the raw amino-acid sequence, 115 residues long: Protein Diedel (115 aa).

Residues 1–24 form the signal peptide; sequence MASPVVSLLLVGICALAFVHVARS. 5 cysteine pairs are disulfide-bonded: C26-C81, C27-C87, C42-C55, C60-C71, and C76-C83.

The protein belongs to the Diedel family. In terms of tissue distribution, detected in hemolymph (at protein level). Also expressed in the fat body and is probably synthesized in the fat body and secreted into the hemolymph.

It localises to the secreted. In terms of biological role, cytokine which promotes survival following infection by Sindbis virus by suppressing the immune deficiency pathway. Following infection by the enteropathogenic bacteria E.carotovora limits intestinal stem cells proliferation. When secreted from muscle or adipose tissue, can attenuate age-related intestinal tissue degeneration by inhibiting apoptosis. In Drosophila melanogaster (Fruit fly), this protein is Protein Diedel.